Here is a 455-residue protein sequence, read N- to C-terminus: tRNA modification GTPase MnmE (455 aa).

Residues Arg-24, Glu-81, and Lys-120 each coordinate (6S)-5-formyl-5,6,7,8-tetrahydrofolate. The region spanning 216 to 378 (GMTVVIAGRP…LREHLKHCMG (163 aa)) is the TrmE-type G domain. Asn-226 is a binding site for K(+). GTP is bound by residues 226–231 (NAGKSS), 245–251 (TDIAGTT), 270–273 (DTAG), and 335–338 (NKAD). Residue Ser-230 coordinates Mg(2+). 3 residues coordinate K(+): Thr-245, Ile-247, and Thr-250. Thr-251 contacts Mg(2+). A (6S)-5-formyl-5,6,7,8-tetrahydrofolate-binding site is contributed by Lys-455.

The protein belongs to the TRAFAC class TrmE-Era-EngA-EngB-Septin-like GTPase superfamily. TrmE GTPase family. In terms of assembly, homodimer. Heterotetramer of two MnmE and two MnmG subunits. K(+) is required as a cofactor.

The protein localises to the cytoplasm. Functionally, exhibits a very high intrinsic GTPase hydrolysis rate. Involved in the addition of a carboxymethylaminomethyl (cmnm) group at the wobble position (U34) of certain tRNAs, forming tRNA-cmnm(5)s(2)U34. The protein is tRNA modification GTPase MnmE of Stutzerimonas stutzeri (strain A1501) (Pseudomonas stutzeri).